A 223-amino-acid polypeptide reads, in one-letter code: N-terminal Xaa-Pro-Lys N-methyltransferase 1 (223 aa).

N-acetylmethionine is present on methionine 1. N-acetylthreonine; in N-terminal Xaa-Pro-Lys N-methyltransferase 1, N-terminally processed is present on threonine 2. Residues glycine 69, arginine 74, 91-93 (DVT), 119-120 (LQ), and glutamine 135 each bind S-adenosyl-L-methionine.

This sequence belongs to the methyltransferase superfamily. NTM1 family.

The protein resides in the nucleus. It carries out the reaction N-terminal L-alanyl-L-prolyl-L-lysyl-[protein] + 3 S-adenosyl-L-methionine = N-terminal N,N,N-trimethyl-L-alanyl-L-prolyl-L-lysyl-[protein] + 3 S-adenosyl-L-homocysteine + 3 H(+). It catalyses the reaction N-terminal L-seryl-L-prolyl-L-lysyl-[protein] + 3 S-adenosyl-L-methionine = N-terminal N,N,N-trimethyl-L-seryl-L-prolyl-L-lysyl-[protein] + 3 S-adenosyl-L-homocysteine + 3 H(+). The catalysed reaction is N-terminal L-prolyl-L-prolyl-L-lysyl-[protein] + 2 S-adenosyl-L-methionine = N-terminal N,N-dimethyl-L-prolyl-L-prolyl-L-lysyl-[protein] + 2 S-adenosyl-L-homocysteine + 2 H(+). In terms of biological role, distributive alpha-N-methyltransferase that methylates the N-terminus of target proteins containing the N-terminal motif [Ala/Gly/Pro/Ser]-Pro-Lys when the initiator Met is cleaved. Specifically catalyzes mono-, di- or tri-methylation of the exposed alpha-amino group of the Ala, Gly or Ser residue in the [Ala/Gly/Ser]-Pro-Lys motif and mono- or di-methylation of Pro in the Pro-Pro-Lys motif. Some of the substrates may be primed by NTMT2-mediated monomethylation. Catalyzes the trimethylation of the N-terminal Gly in CENPA (after removal of Met-1). Responsible for the N-terminal methylation of KLHL31, MYL2, MYL3, RB1, RCC1, RPL23A and SET. Required during mitosis for normal bipolar spindle formation and chromosome segregation via its action on RCC1. This chain is N-terminal Xaa-Pro-Lys N-methyltransferase 1 (Ntmt1), found in Mus musculus (Mouse).